We begin with the raw amino-acid sequence, 93 residues long: MSRSIKKPPFCAPHVLRLANRAIASNRNAIINIHSRSSVILHKFIGLTFGVHNGRTYVPVKVTDNIVGRKFGEFSPTRRFLGHAGDKKVSRKG.

Belongs to the universal ribosomal protein uS19 family.

Its function is as follows. Protein S19 forms a complex with S13 that binds strongly to the 16S ribosomal RNA. The chain is Small ribosomal subunit protein uS19 from Anaplasma marginale (strain Florida).